The sequence spans 334 residues: Syntaxin-18 (334 aa).

The Cytoplasmic portion of the chain corresponds to M1–N308. Disordered stretches follow at residues G29 to S50 and L166 to E225. Basic and acidic residues-rich tracts occupy residues G33–S50 and L166–S182. Residues E183–D192 are compositionally biased toward polar residues. Basic and acidic residues predominate over residues S193–L207. The t-SNARE coiled-coil homology domain occupies I242–A304. Residues A309–L329 form a helical; Anchor for type IV membrane protein membrane-spanning segment. Residues D330–S334 are Lumenal-facing.

This sequence belongs to the syntaxin family. In terms of assembly, component of a SNARE complex consisting of STX18, USE1L, BNIP1/SEC20L, and SEC22B. RINT1/TIP20L and ZW10 are associated with the complex through interaction with BNIP1/SEC20L. Interacts directly with USE1L and BNIP1/SEC20L.

The protein resides in the endoplasmic reticulum membrane. Its subcellular location is the golgi apparatus membrane. Functionally, syntaxin that may be involved in targeting and fusion of Golgi-derived retrograde transport vesicles with the ER. In Mus musculus (Mouse), this protein is Syntaxin-18 (Stx18).